A 229-amino-acid chain; its full sequence is Triosephosphate isomerase (229 aa).

6-8 is a substrate binding site; it reads NFK. His-88 serves as the catalytic Electrophile. Catalysis depends on Glu-157, which acts as the Proton acceptor. Positions 163 and 193 each coordinate substrate.

This sequence belongs to the triosephosphate isomerase family. In terms of assembly, homodimer.

The protein localises to the cytoplasm. The enzyme catalyses D-glyceraldehyde 3-phosphate = dihydroxyacetone phosphate. It functions in the pathway carbohydrate biosynthesis; gluconeogenesis. Its pathway is carbohydrate degradation; glycolysis; D-glyceraldehyde 3-phosphate from glycerone phosphate: step 1/1. Its function is as follows. Involved in the gluconeogenesis. Catalyzes stereospecifically the conversion of dihydroxyacetone phosphate (DHAP) to D-glyceraldehyde-3-phosphate (G3P). The sequence is that of Triosephosphate isomerase from Sulfurovum sp. (strain NBC37-1).